The following is a 512-amino-acid chain: GMP synthase [glutamine-hydrolyzing] (512 aa).

The Glutamine amidotransferase type-1 domain occupies 7-197 (TIIVLDFGSQ…VFGVCGCSEG (191 aa)). Cysteine 84 serves as the catalytic Nucleophile. Catalysis depends on residues histidine 171 and glutamate 173. Residues 198–387 (WNMENFIEVE…LGIPDEIVWR (190 aa)) form the GMPS ATP-PPase domain. Position 225–231 (225–231 (SGGVDSS)) interacts with ATP.

As to quaternary structure, homodimer.

It catalyses the reaction XMP + L-glutamine + ATP + H2O = GMP + L-glutamate + AMP + diphosphate + 2 H(+). The protein operates within purine metabolism; GMP biosynthesis; GMP from XMP (L-Gln route): step 1/1. Functionally, catalyzes the synthesis of GMP from XMP. This is GMP synthase [glutamine-hydrolyzing] from Bacillus mycoides (strain KBAB4) (Bacillus weihenstephanensis).